Consider the following 289-residue polypeptide: 5'-adenylylsulfate reductase-like 7 (289 aa).

The N-terminal stretch at 1 to 23 (MNLWVSIFLVSAIAGSCLPSGFA) is a signal peptide. Residues 37 to 157 (SVIEQKCPRS…LIQFYKETTG (121 aa)) form the Thioredoxin domain. Asparagine 132 and asparagine 184 each carry an N-linked (GlcNAc...) asparagine glycan. Residues 198-218 (MVLALMFLSLKLAILIFPIMG) form a helical membrane-spanning segment.

The protein localises to the membrane. The chain is 5'-adenylylsulfate reductase-like 7 (APRL7) from Arabidopsis thaliana (Mouse-ear cress).